The primary structure comprises 314 residues: F-box protein AUF2 (314 aa).

One can recognise an F-box domain in the interval 1 to 49 (MDVFDGLPDPIIVDILNKVGDVKTLLRCSSLSKRFNSLVPQSESLTLRL).

Part of a SCF (ASK-cullin-F-box) protein ligase complex.

It localises to the nucleus. The protein operates within protein modification; protein ubiquitination. Functionally, component of SCF(ASK-cullin-F-box) E3 ubiquitin ligase complexes, which may mediate the ubiquitination and subsequent proteasomal degradation of target proteins. The chain is F-box protein AUF2 from Arabidopsis thaliana (Mouse-ear cress).